A 371-amino-acid chain; its full sequence is uncharacterized protein (371 aa).

Belongs to the Gfo/Idh/MocA family.

This is an uncharacterized protein from Synechocystis sp. (strain ATCC 27184 / PCC 6803 / Kazusa).